We begin with the raw amino-acid sequence, 125 residues long: Protein ApaG (125 aa).

The ApaG domain maps to 3 to 125 (TAVTEGIEVT…FPLVVPGSLN (123 aa)).

In Anaeromyxobacter dehalogenans (strain 2CP-1 / ATCC BAA-258), this protein is Protein ApaG.